Consider the following 522-residue polypeptide: DNA damage-binding protein cmr1 (522 aa).

A compositionally biased stretch (polar residues) spans 34-47; it reads VFTPTLPNRATGSQ. Disordered regions lie at residues 34–89 and 217–239; these read VFTP…KRKA and QEKP…DPVL. Residues 49-59 show a composition bias toward basic residues; the sequence is KTKKKPAPKKV. The stretch at 182–223 is one WD 1 repeat; that stretch reads LTPERVYTMTFHPSETKPLIFAGDKMGHLGILDASQEKPTSV. Residues 226–236 show a composition bias toward acidic residues; sequence EDEDEEDDDPD. WD repeat units follow at residues 244 to 284, 294 to 331, 336 to 376, 381 to 422, 445 to 488, and 491 to 522; these read PHTR…SVER, VPLS…QGSV, LSEK…RREP, EHQS…ASWK, GRWV…LAQL, and DGIT…CLWM.

The protein belongs to the WD repeat DDB2/WDR76 family.

In terms of biological role, DNA-binding protein that binds to both single- and double-stranded DNA. Binds preferentially to UV-damaged DNA. May be involved in DNA-metabolic processes. This is DNA damage-binding protein cmr1 from Aspergillus oryzae (strain ATCC 42149 / RIB 40) (Yellow koji mold).